A 287-amino-acid chain; its full sequence is ATP synthase gamma chain (287 aa).

This sequence belongs to the ATPase gamma chain family. F-type ATPases have 2 components, CF(1) - the catalytic core - and CF(0) - the membrane proton channel. CF(1) has five subunits: alpha(3), beta(3), gamma(1), delta(1), epsilon(1). CF(0) has three main subunits: a, b and c.

The protein resides in the cell inner membrane. In terms of biological role, produces ATP from ADP in the presence of a proton gradient across the membrane. The gamma chain is believed to be important in regulating ATPase activity and the flow of protons through the CF(0) complex. This chain is ATP synthase gamma chain, found in Xylella fastidiosa (strain M23).